A 93-amino-acid polypeptide reads, in one-letter code: Small ribosomal subunit protein uS19c (93 aa).

Belongs to the universal ribosomal protein uS19 family.

Its subcellular location is the plastid. The protein resides in the chloroplast. Functionally, protein S19 forms a complex with S13 that binds strongly to the 16S ribosomal RNA. The protein is Small ribosomal subunit protein uS19c of Stigeoclonium helveticum (Green alga).